Reading from the N-terminus, the 339-residue chain is Deoxyguanosinetriphosphate triphosphohydrolase-like protein (339 aa).

The HD domain maps to 75-186 (RLTHTLEVAQ…VQISDKIAYI (112 aa)).

Belongs to the dGTPase family. Type 2 subfamily.

In Caldanaerobacter subterraneus subsp. tengcongensis (strain DSM 15242 / JCM 11007 / NBRC 100824 / MB4) (Thermoanaerobacter tengcongensis), this protein is Deoxyguanosinetriphosphate triphosphohydrolase-like protein.